A 144-amino-acid chain; its full sequence is UPF0102 protein BURPS1106A_3900 (144 aa).

Residues 1–28 form a disordered region; that stretch reads MCHAREASPGTGEPEAAPRDNFPRAAGS.

The protein belongs to the UPF0102 family.

This is UPF0102 protein BURPS1106A_3900 from Burkholderia pseudomallei (strain 1106a).